Reading from the N-terminus, the 437-residue chain is Transmembrane protein with metallophosphoesterase domain (437 aa).

The next 5 membrane-spanning stretches (helical) occupy residues 7–27, 41–61, 87–107, 116–136, and 164–184; these read LSAE…MLIS, ALLF…LGSL, IIVL…FFLV, LLSF…FVFG, and VLAL…AAQP. Asp-211, His-213, Asp-243, Asn-274, His-376, and His-378 together coordinate a divalent metal cation.

This sequence belongs to the metallophosphoesterase superfamily. LOC643853 family. The cofactor is a divalent metal cation.

The protein localises to the membrane. This chain is Transmembrane protein with metallophosphoesterase domain (tmppe), found in Danio rerio (Zebrafish).